Reading from the N-terminus, the 497-residue chain is Cytochrome P450 71A18 (497 aa).

The chain crosses the membrane as a helical span at residues 4 to 24 (TLMVSLCLTTLLTLLLLKKFL). Cys439 is a binding site for heme.

This sequence belongs to the cytochrome P450 family. The cofactor is heme.

The protein resides in the membrane. The protein is Cytochrome P450 71A18 (CYP71A18) of Arabidopsis thaliana (Mouse-ear cress).